A 339-amino-acid polypeptide reads, in one-letter code: DNA-directed RNA polymerase subunit alpha (339 aa).

Residues 1 to 233 form an alpha N-terminal domain (alpha-NTD) region; it reads MVREEVAGST…DLFLPFLHAE (233 aa). An alpha C-terminal domain (alpha-CTD) region spans residues 264 to 339; it reads KKGIPLNCIF…IDLLKNKLSF (76 aa).

Belongs to the RNA polymerase alpha chain family. In plastids the minimal PEP RNA polymerase catalytic core is composed of four subunits: alpha, beta, beta', and beta''. When a (nuclear-encoded) sigma factor is associated with the core the holoenzyme is formed, which can initiate transcription.

It localises to the plastid. It is found in the chloroplast. It catalyses the reaction RNA(n) + a ribonucleoside 5'-triphosphate = RNA(n+1) + diphosphate. Functionally, DNA-dependent RNA polymerase catalyzes the transcription of DNA into RNA using the four ribonucleoside triphosphates as substrates. This is DNA-directed RNA polymerase subunit alpha from Psathyrostachys fragilis (Russian wild rye).